The sequence spans 744 residues: Zinc finger protein 483 (744 aa).

Residues 52-134 enclose the SCAN box domain; the sequence is RQRFRWFCYS…TLIEDLTQML (83 aa). The interval 137–156 is disordered; that stretch reads KDPVSQDSTVSQEENSKEDK. The 72-residue stretch at 170–241 folds into the KRAB domain; sequence ITLKDVAVNF…EEVSKSSRLD (72 aa). 2 disordered regions span residues 263–308 and 350–385; these read ESQQ…SPFG and KEKT…KIHL. The segment covering 277-293 has biased composition (polar residues); the sequence is NQGNSKGRVAQNKTLGS. 2 stretches are compositionally biased toward basic and acidic residues: residues 298–308 and 350–363; these read KKFDPDKSPFG and KEKT…KSND. 11 consecutive C2H2-type zinc fingers follow at residues 439–461, 467–489, 495–517, 523–545, 551–573, 579–601, 607–629, 635–657, 663–685, 691–713, and 719–741; these read HKCS…RRIH, YMCN…HRTH, FKCD…QRIH, YKCK…QRIH, YTCS…QRIH, YKCG…QRIH, YLCN…QRLH, YKCN…QRIH, YKCK…HRIH, YECN…LKIH, and YECN…RGFH.

This sequence belongs to the krueppel C2H2-type zinc-finger protein family.

The protein resides in the nucleus. Its function is as follows. May be involved in transcriptional regulation. This is Zinc finger protein 483 (ZNF483) from Homo sapiens (Human).